We begin with the raw amino-acid sequence, 294 residues long: uncharacterized protein (294 aa).

The disordered stretch occupies residues 1–215 (MTTAITPDKK…DQDDDDQKDL (215 aa)). Composition is skewed to basic residues over residues 27–43 (TKPR…KSKK) and 50–78 (AKKR…KKAP). The segment covering 79–88 (MKAPSKPAAK) has biased composition (low complexity). The span at 92-102 (QQAQASLQKPI) shows a compositional bias: polar residues. The span at 118-136 (PRPPTPIPPTGVKPEPAPR) shows a compositional bias: pro residues. The span at 145 to 160 (SVSSTTPRTSATTGTT) shows a compositional bias: low complexity.

This is an uncharacterized protein from Caenorhabditis elegans.